The chain runs to 226 residues: Cytochrome c oxidase subunit 2 (226 aa).

At 1-25 the chain is on the mitochondrial intermembrane side; the sequence is MNTWLLSLQNSNSPTYDMMIFFHDF. A helical transmembrane segment spans residues 26 to 47; the sequence is TMMILIFITLLILFIMFTMINN. The Mitochondrial matrix portion of the chain corresponds to 48-61; sequence NLINRFLLQGHFIE. Residues 62-81 traverse the membrane as a helical segment; the sequence is LIWTITPMIILILIAIPSFK. The Mitochondrial intermembrane portion of the chain corresponds to 82–226; the sequence is ILYLTDEMFN…YFKNWLKSFL (145 aa). Cu cation contacts are provided by histidine 160, cysteine 195, glutamate 197, cysteine 199, histidine 203, and methionine 206. Glutamate 197 contributes to the Mg(2+) binding site.

This sequence belongs to the cytochrome c oxidase subunit 2 family. Component of the cytochrome c oxidase (complex IV, CIV), a multisubunit enzyme composed of a catalytic core of 3 subunits and several supernumerary subunits. The complex exists as a monomer or a dimer and forms supercomplexes (SCs) in the inner mitochondrial membrane with ubiquinol-cytochrome c oxidoreductase (cytochrome b-c1 complex, complex III, CIII). Cu cation serves as cofactor.

It is found in the mitochondrion inner membrane. It catalyses the reaction 4 Fe(II)-[cytochrome c] + O2 + 8 H(+)(in) = 4 Fe(III)-[cytochrome c] + 2 H2O + 4 H(+)(out). In terms of biological role, component of the cytochrome c oxidase, the last enzyme in the mitochondrial electron transport chain which drives oxidative phosphorylation. The respiratory chain contains 3 multisubunit complexes succinate dehydrogenase (complex II, CII), ubiquinol-cytochrome c oxidoreductase (cytochrome b-c1 complex, complex III, CIII) and cytochrome c oxidase (complex IV, CIV), that cooperate to transfer electrons derived from NADH and succinate to molecular oxygen, creating an electrochemical gradient over the inner membrane that drives transmembrane transport and the ATP synthase. Cytochrome c oxidase is the component of the respiratory chain that catalyzes the reduction of oxygen to water. Electrons originating from reduced cytochrome c in the intermembrane space (IMS) are transferred via the dinuclear copper A center (CU(A)) of subunit 2 and heme A of subunit 1 to the active site in subunit 1, a binuclear center (BNC) formed by heme A3 and copper B (CU(B)). The BNC reduces molecular oxygen to 2 water molecules using 4 electrons from cytochrome c in the IMS and 4 protons from the mitochondrial matrix. In Lasius sp, this protein is Cytochrome c oxidase subunit 2 (COII).